Reading from the N-terminus, the 150-residue chain is Meiotically up-regulated gene 108 protein (150 aa).

A compositionally biased stretch (polar residues) spans 1-11 (MANRFTSSDQT). Residues 1–150 (MANRFTSSDQ…RDISLLGSTI (150 aa)) form a disordered region. Over residues 12–23 (QETHGHHVDKHS) the composition is skewed to basic and acidic residues. The span at 83–93 (NRSSQHTGRVN) shows a compositional bias: polar residues.

The protein localises to the cytoplasm. It localises to the nucleus. Functionally, has a role in meiosis. In Schizosaccharomyces pombe (strain 972 / ATCC 24843) (Fission yeast), this protein is Meiotically up-regulated gene 108 protein (mug108).